A 333-amino-acid polypeptide reads, in one-letter code: Large ribosomal subunit protein uL3 (333 aa).

Composition is skewed to basic residues over residues 1-10 and 17-26; these read MGMKRNRPRR and PRKRAKRPVP. Positions 1–29 are disordered; the sequence is MGMKRNRPRRGSLAFSPRKRAKRPVPKIR.

It belongs to the universal ribosomal protein uL3 family. In terms of assembly, part of the 50S ribosomal subunit. Forms a cluster with proteins L14 and L24e.

In terms of biological role, one of the primary rRNA binding proteins, it binds directly near the 3'-end of the 23S rRNA, where it nucleates assembly of the 50S subunit. This chain is Large ribosomal subunit protein uL3, found in Methanococcus aeolicus (strain ATCC BAA-1280 / DSM 17508 / OCM 812 / Nankai-3).